The sequence spans 1088 residues: MGKYNLILSEYLSFIYNSQSAVQIPIYYSSNSELENRCIEFHSKCLENSKNGLSLRKLFVEYNDVIENATLLSILSYSYDKYNAVERKLVKYAKGKPLEADLTVNELDYENNKITSELFPTAEEYTDSLMDPAILTSLSSNLNAVMFWLEKHENDVAEKLKVYKRRLDLFTIVASTINKYGVPRHNAKYRYEYDVMKDKPYYLVTWANSSIEMLMSVFSHDDYLIAKELIVLSYSNRSTLAKLVSSPMSILVALVDINGTFITNEELELEFSNKYVRAIVPDQTFDELNQMLDNMRKAGLVDIPKMIQDWLVDRSIEKFPLMAKIYSWSFHVGFRKQKMLDAALDQLKTEYTENVDDEMYREYTMLIRDEVVKMLEEPVKHDDHLLRDSELAGLLSMSSASNGESRQLKFGRKTIFSTKKNMHVMDDMANERYTPGIIPPVNVDKPIPLGRRDVPGRRTRIIFILPYEYFIAQHAVVEKMLIYAKHTREYAEFYSQSNQLLSYGDVTRFLSNNTMVLYTDVSQWDSSQHNTQPFRKGIIMGLDILANMTNDAKVLQTLNLYKQTQINLMDSYVQIPDGNVIKKIQYGAVASGEKQTKAANSIANLALIKTVLSRISNKHSFATKIIRVDGDDNYAVLQFNTEVTKQMIQDVSNDVRETYARMNAKVKALVSTVGIEIAKRYIAGGKIFFRAGINLLNNEKRGQSTQWDQAAILYSNYIVNRLRGFETDREFILTKIMQMTSVAITGSLRLFPSERVLTTNSTFKVFDSEDFIIEYGTTDDEVYIQRAFMSLSSQKSGIADEIAASSTFKNYVTRLSEQLLFSKNNIVSRGIALTEKAKLNSYAPISLEKRRAQISALLTMLQKPVTFKSSKITINDILRDIKPFFTVSDAHLPIQYQKFMPTLPDNVQYIIQCIGSRTYQIEDDGSKSAISRLISKYSVYKPSIEELYKVISLHENEIQLYLISLGIPKIDADTYVGSKIYSQDKYRILESYVYNLLSINYGCYQLFDFNSPDLEKLIRIPFKGKIPAVTFILHLYAKLEVINYAIKNGSWISLFCNYPKSEMIKLWKKMWNITSLRSPYTNANFFQD.

The region spanning 501-687 (LSYGDVTRFL…AKRYIAGGKI (187 aa)) is the RdRp catalytic domain.

This sequence belongs to the reoviridae RNA-directed RNA polymerase family. Interacts with VP3 (Potential). Interacts with VP2; this interaction activates VP1. Interacts with NSP5; this interaction is probably necessary for the formation of functional virus factories. Interacts with NSP2; this interaction is weak. Mg(2+) is required as a cofactor.

The protein resides in the virion. The catalysed reaction is RNA(n) + a ribonucleoside 5'-triphosphate = RNA(n+1) + diphosphate. Functionally, RNA-directed RNA polymerase that is involved in both transcription and genome replication. Together with VP3 capping enzyme, forms an enzyme complex positioned near the channels situated at each of the five-fold vertices of the core. Following infection, the outermost layer of the virus is lost, leaving a double-layered particle (DLP) made up of the core and VP6 shell. VP1 then catalyzes the transcription of fully conservative plus-strand genomic RNAs that are extruded through the DLP's channels into the cytoplasm where they function as mRNAs for translation of viral proteins. One copy of each of the viral (+)RNAs is also recruited during core assembly, together with newly synthesized polymerase complexes and VP2. The polymerase of these novo-formed particles catalyzes the synthesis of complementary minus-strands leading to dsRNA formation. To do so, the polymerase specifically recognizes and binds 4 bases 5'-UGUG-3' in the conserved 3'-sequence of plus-strand RNA templates. VP2 presumably activates the autoinhibited VP1-RNA complex to coordinate packaging and genome replication. Once dsRNA synthesis is complete, the polymerase switches to the transcriptional mode, thus providing secondary transcription. This chain is RNA-directed RNA polymerase, found in Chlorocebus pygerythrus (Vervet monkey).